A 425-amino-acid chain; its full sequence is Serine/threonine transporter SstT (425 aa).

Transmembrane regions (helical) follow at residues 11–31, 43–63, 91–111, 141–161, 182–202, 216–236, 290–310, 316–336, and 363–383; these read FLNGSLVLQIVIGIVAGLILA, FLGSLFVSALKAVAPILVFVL, LFAASTAVMVSYFFPTTLVLV, ALVSGNFIGILAWAAGLGFAL, IVHLVIRFAPLGIFGLVAGTI, LLAVLLGCMILIALVINPIIV, IPLGATINMAGASITITVLTL, LGIEFDIATAILLSVVAAVSA, and VAMQVVAIGFIIGVVQDSAET.

It belongs to the dicarboxylate/amino acid:cation symporter (DAACS) (TC 2.A.23) family.

It is found in the cell inner membrane. The enzyme catalyses L-serine(in) + Na(+)(in) = L-serine(out) + Na(+)(out). It catalyses the reaction L-threonine(in) + Na(+)(in) = L-threonine(out) + Na(+)(out). Its function is as follows. Involved in the import of serine and threonine into the cell, with the concomitant import of sodium (symport system). This Psychromonas ingrahamii (strain DSM 17664 / CCUG 51855 / 37) protein is Serine/threonine transporter SstT.